The sequence spans 548 residues: Solute carrier family 22 member 7 (548 aa).

Transmembrane regions (helical) follow at residues 21–41, 146–166, 180–200, 204–224, 234–254, 259–279, 346–366, 376–397, 404–423, 432–452, 466–486, and 493–513; these read VALLALPRVLLPLHFLLPIFL, AASTFFFAGVLVGAVAFGYLS, VSTLVLGLASAASVSYVMFAI, LTGSALAGFTIIVMPLELEWL, VLSSTFWTGGMMLLALVGYLI, WLLLAVTLPCAPGILSLWWVP, ISLCCVVVWFGVNFSYYGLSL, YQTQLLFGAVELPSKLLVYLSV, LTQAGTLLGTALAFGTRLLV, TVLAVMGKAFSEAAFTTAYLF, MGLTALVGRLGGSLAPLAALL, and LPKLTYGGIALLAAGTALLLP. Residues 522-548 form a disordered region; it reads ETIQDVERKSAPTSLQEEEMPMKQVQN.

The protein belongs to the major facilitator (TC 2.A.1) superfamily. Organic cation transporter (TC 2.A.1.19) family.

It is found in the basolateral cell membrane. The protein localises to the apical cell membrane. It localises to the cell membrane. The enzyme catalyses orotate(out) + L-glutamate(in) = orotate(in) + L-glutamate(out). It catalyses the reaction 3',5'-cyclic GMP(in) = 3',5'-cyclic GMP(out). The catalysed reaction is GMP(in) = GMP(out). It carries out the reaction 2'-deoxyguanosine(in) = 2'-deoxyguanosine(out). The enzyme catalyses GDP(in) = GDP(out). It catalyses the reaction guanosine(in) = guanosine(out). The catalysed reaction is GTP(in) = GTP(out). It carries out the reaction 3',5'-cyclic AMP(in) = 3',5'-cyclic AMP(out). The enzyme catalyses creatinine(in) = creatinine(out). It catalyses the reaction prostaglandin E2(out) = prostaglandin E2(in). The catalysed reaction is 2-oxoglutarate(in) = 2-oxoglutarate(out). It carries out the reaction glutarate(in) = glutarate(out). The enzyme catalyses urate(out) = urate(in). It catalyses the reaction estrone 3-sulfate(out) = estrone 3-sulfate(in). Functions as a Na(+)-independent bidirectional multispecific transporter. Contributes to the renal and hepatic elimination of endogenous organic compounds from the systemic circulation into the urine and bile, respectively. Capable of transporting a wide range of purine and pyrimidine nucleobases, nucleosides and nucleotides, with cGMP, 2'deoxyguanosine and GMP being the preferred substrates. Functions as a pH- and chloride-independent cGMP bidirectional facilitative transporter that can regulate both intracellular and extracellular levels of cGMP and may be involved in cGMP signaling pathways. Mediates orotate/glutamate bidirectional exchange and most likely display a physiological role in hepatic release of glutamate into the blood. Involved in renal secretion and possible reabsorption of creatinine. Able to uptake prostaglandin E2 (PGE2) and may contribute to PGE2 renal excretion. Also transports alpha-ketoglutarate and urate. Apart from the orotate/glutamate exchange, the counterions for the uptake of other SLC22A7/OAT2 substrates remain to be identified. The chain is Solute carrier family 22 member 7 (SLC22A7) from Pongo abelii (Sumatran orangutan).